A 208-amino-acid polypeptide reads, in one-letter code: Large ribosomal subunit protein uL4 (208 aa).

Residues 45-89 (RQGTHAHKNRSAVSGGGKKPWRQKGTGRARQGSTRSPQWRGGGTV) are disordered.

The protein belongs to the universal ribosomal protein uL4 family. As to quaternary structure, part of the 50S ribosomal subunit.

Functionally, one of the primary rRNA binding proteins, this protein initially binds near the 5'-end of the 23S rRNA. It is important during the early stages of 50S assembly. It makes multiple contacts with different domains of the 23S rRNA in the assembled 50S subunit and ribosome. Its function is as follows. Forms part of the polypeptide exit tunnel. The sequence is that of Large ribosomal subunit protein uL4 from Lactococcus lactis subsp. cremoris (strain SK11).